We begin with the raw amino-acid sequence, 409 residues long: Multifunctional CCA protein (409 aa).

Positions 8 and 11 each coordinate ATP. CTP-binding residues include G8 and R11. Mg(2+) is bound by residues D21 and D23. Positions 91, 137, and 140 each coordinate ATP. CTP-binding residues include R91, R137, and R140. In terms of domain architecture, HD spans 228-329 (TGIHTLMVVE…ITLMDQNDAW (102 aa)).

Belongs to the tRNA nucleotidyltransferase/poly(A) polymerase family. Bacterial CCA-adding enzyme type 1 subfamily. Monomer. Can also form homodimers and oligomers. Mg(2+) serves as cofactor. The cofactor is Ni(2+).

The catalysed reaction is a tRNA precursor + 2 CTP + ATP = a tRNA with a 3' CCA end + 3 diphosphate. The enzyme catalyses a tRNA with a 3' CCA end + 2 CTP + ATP = a tRNA with a 3' CCACCA end + 3 diphosphate. Functionally, catalyzes the addition and repair of the essential 3'-terminal CCA sequence in tRNAs without using a nucleic acid template. Adds these three nucleotides in the order of C, C, and A to the tRNA nucleotide-73, using CTP and ATP as substrates and producing inorganic pyrophosphate. tRNA 3'-terminal CCA addition is required both for tRNA processing and repair. Also involved in tRNA surveillance by mediating tandem CCA addition to generate a CCACCA at the 3' terminus of unstable tRNAs. While stable tRNAs receive only 3'-terminal CCA, unstable tRNAs are marked with CCACCA and rapidly degraded. This chain is Multifunctional CCA protein, found in Psychromonas ingrahamii (strain DSM 17664 / CCUG 51855 / 37).